The chain runs to 419 residues: Probable pectate lyase C (419 aa).

An N-terminal signal peptide occupies residues M1–A19. 3 N-linked (GlcNAc...) asparagine glycosylation sites follow: N48, N164, and N201. The active site involves R204. One can recognise an EF-hand domain in the interval N261–M296. Residues D274, D276, D278, and T280 each contribute to the Ca(2+) site. An N-linked (GlcNAc...) asparagine glycan is attached at N282. Ca(2+) is bound at residue E285. The tract at residues A350–S395 is disordered. Positions D363–D372 are enriched in low complexity. Residues T373 to L386 are compositionally biased toward acidic residues.

This sequence belongs to the polysaccharide lyase 1 family. Requires Ca(2+) as cofactor.

It localises to the secreted. The catalysed reaction is Eliminative cleavage of (1-&gt;4)-alpha-D-galacturonan to give oligosaccharides with 4-deoxy-alpha-D-galact-4-enuronosyl groups at their non-reducing ends.. Its function is as follows. Pectinolytic enzyme consist of four classes of enzymes: pectin lyase, polygalacturonase, pectin methylesterase and rhamnogalacturonase. Among pectinolytic enzymes, pectin lyase is the most important in depolymerization of pectin, since it cleaves internal glycosidic bonds of highly methylated pectins. Favors pectate, the anion, over pectin, the methyl ester. The protein is Probable pectate lyase C (plyC) of Aspergillus flavus (strain ATCC 200026 / FGSC A1120 / IAM 13836 / NRRL 3357 / JCM 12722 / SRRC 167).